Here is a 317-residue protein sequence, read N- to C-terminus: MARGLDLAPLLLLLLAMATRFCTAQSNCTCPTNKMTVCDTNGPGGVCQCRAMGSQVLVDCSTLTSKCLLLKARMSARKSGRSLVMPSEHAILDNDGLYDPECDDKGRFKARQCNQTSVCWCVNSVGVRRTDKGDQSLRCDEVVRTHHILIELRHRPTDRAFNHSDLDSELRRLFQERYKLHPSFLSAVHYEEPTIQIELRQNASQKGLRDVDIADAAYYFERDIKGESLFMGRRGLDVQVRGEPLHVERTLIYYLDEKPPQFSMKRLTAGVIAVIAVVSVAVVAGVVVLVVTKRRKSGKYKKVELKELGEMRSEPSL.

The signal sequence occupies residues 1 to 24 (MARGLDLAPLLLLLLAMATRFCTA). At 25–270 (QSNCTCPTNK…QFSMKRLTAG (246 aa)) the chain is on the extracellular side. N-linked (GlcNAc...) asparagine glycosylation occurs at N27. The Thyroglobulin type-1 domain maps to 64–139 (TSKCLLLKAR…TDKGDQSLRC (76 aa)). 3 disulfides stabilise this stretch: C67/C102, C113/C119, and C121/C139. A glycan (N-linked (GlcNAc...) asparagine) is linked at N114. Residues N162 and N202 are each glycosylated (N-linked (GlcNAc...) asparagine). The helical transmembrane segment at 271 to 291 (VIAVIAVVSVAVVAGVVVLVV) threads the bilayer. Over 292–317 (TKRRKSGKYKKVELKELGEMRSEPSL) the chain is Cytoplasmic.

Belongs to the EPCAM family. As to expression, expressed in kidney, lung, ovary and testis. High levels of expression in immortalized keratinocytes.

It localises to the membrane. Functionally, may function as a growth factor receptor. In Mus musculus (Mouse), this protein is Tumor-associated calcium signal transducer 2 (Tacstd2).